The sequence spans 303 residues: Acetaldehyde dehydrogenase (303 aa).

The active-site Acyl-thioester intermediate is cysteine 131. NAD(+) is bound by residues 162–170 (SVGPGTRAN) and asparagine 273.

This sequence belongs to the acetaldehyde dehydrogenase family.

It catalyses the reaction acetaldehyde + NAD(+) + CoA = acetyl-CoA + NADH + H(+). This Marinomonas sp. (strain MWYL1) protein is Acetaldehyde dehydrogenase.